The following is a 310-amino-acid chain: Transcription initiation factor IIA subunit 1 (310 aa).

Disordered stretches follow at residues 52 to 78 (AISN…LSTV), 91 to 197 (IQLN…NNKD), and 218 to 261 (VIPQ…DDPD). 2 stretches are compositionally biased toward low complexity: residues 62-77 (TTAT…TLST) and 122-160 (SNGT…PSSL). Acidic residues-rich tracts occupy residues 173 to 183 (TLDESDNDDDN), 225 to 236 (LNDDDDLDDEEI), and 246 to 261 (DSLG…DDPD).

The protein belongs to the TFIIA subunit 1 family. As to quaternary structure, TFIIA is a heterodimer of the large subunit 1 and a small subunit gamma.

The protein resides in the nucleus. TFIIA is a component of the transcription machinery of RNA polymerase II and plays an important role in transcriptional activation. TFIIA in a complex with tbp mediates transcriptional activity. This is Transcription initiation factor IIA subunit 1 (gtf2a1) from Dictyostelium discoideum (Social amoeba).